The following is a 278-amino-acid chain: Probable ribosomal RNA small subunit methyltransferase A (278 aa).

S-adenosyl-L-methionine-binding residues include His-25, Met-27, Gly-52, Glu-73, Asp-98, and Asn-114.

This sequence belongs to the class I-like SAM-binding methyltransferase superfamily. rRNA adenine N(6)-methyltransferase family. RsmA subfamily.

The protein localises to the cytoplasm. Its function is as follows. Specifically dimethylates two adjacent adenosines in the loop of a conserved hairpin near the 3'-end of 16S rRNA in the 30S particle. May play a critical role in biogenesis of 30S subunits. The protein is Probable ribosomal RNA small subunit methyltransferase A of Methanopyrus kandleri (strain AV19 / DSM 6324 / JCM 9639 / NBRC 100938).